The primary structure comprises 91 residues: Small ribosomal subunit protein uS19m (91 aa).

This sequence belongs to the universal ribosomal protein uS19 family. In terms of assembly, component of the mitochondrial small ribosomal subunit (mt-SSU). Mature N.crassa 74S mitochondrial ribosomes consist of a small (37S) and a large (54S) subunit. The 37S small subunit contains a 16S ribosomal RNA (16S mt-rRNA) and 32 different proteins. The 54S large subunit contains a 23S rRNA (23S mt-rRNA) and 42 different proteins.

The protein localises to the mitochondrion. Component of the mitochondrial ribosome (mitoribosome), a dedicated translation machinery responsible for the synthesis of mitochondrial genome-encoded proteins, including at least some of the essential transmembrane subunits of the mitochondrial respiratory chain. The mitoribosomes are attached to the mitochondrial inner membrane and translation products are cotranslationally integrated into the membrane. The chain is Small ribosomal subunit protein uS19m (rsm19) from Neurospora crassa (strain ATCC 24698 / 74-OR23-1A / CBS 708.71 / DSM 1257 / FGSC 987).